The primary structure comprises 4518 residues: Dynein axonemal heavy chain 11 (4518 aa).

Positions 1-1857 (MAASVAAQEA…LVHICDAQFQ (1857 aa)) are stem. AAA regions lie at residues 1858–2079 (YFYE…VLVV), 2139–2368 (QMVR…TSFK), 2474–2721 (TMDP…VFQG), and 2819–3068 (NYND…EGRH). ATP-binding positions include 1896–1903 (GPAGTGKT), 2177–2184 (GNAGTGKS), 2512–2519 (GNAGVGKT), and 2857–2864 (GVGGSGKQ). The stalk stretch occupies residues 3074-3405 (KSFLEQISLF…GQSIKSFEAQ (332 aa)). A coiled-coil region spans residues 3322–3391 (LAQANLELAT…NRLVKELEVK (70 aa)). 2 AAA regions span residues 3461–3688 (LTDD…EIER) and 3898–4124 (LRNF…VLYN).

The protein belongs to the dynein heavy chain family. In terms of assembly, consists of at least two heavy chains and a number of intermediate and light chains. Interacts with CFAP45.

It localises to the cytoplasm. The protein localises to the cytoskeleton. The protein resides in the cilium axoneme. Its function is as follows. Force generating protein of respiratory cilia. Produces force towards the minus ends of microtubules. Dynein has ATPase activity; the force-producing power stroke is thought to occur on release of ADP. This is Dynein axonemal heavy chain 11 (DNAH11) from Sus scrofa (Pig).